Consider the following 256-residue polypeptide: Coiled-coil domain-containing protein 90B, mitochondrial (256 aa).

A mitochondrion-targeting transit peptide spans 1 to 42; sequence MRSRWIWRFLRPDGGGIRWTSTPHGRLSPALRRGFLTTTTKS. Positions 129 to 167 form a coiled coil; that stretch reads LEKSEFANLRAENEKMKIELDQVKQQLTNETSRIRADNK. Residues 231-253 traverse the membrane as a helical segment; it reads TIRYLAASVFTCLAIALGFYRFW.

Belongs to the CCDC90 family. Interacts with MCU.

The protein resides in the mitochondrion membrane. In Mus musculus (Mouse), this protein is Coiled-coil domain-containing protein 90B, mitochondrial (Ccdc90b).